Consider the following 408-residue polypeptide: UPF0496 protein At5g66670 (408 aa).

2 helical membrane passes run 239–259 and 262–282; these read VVFATAFVTVFVLSVVAAAMM and PVLSAVASGLTTPIEVVGMWC.

The protein belongs to the UPF0496 family.

The protein localises to the membrane. This is UPF0496 protein At5g66670 from Arabidopsis thaliana (Mouse-ear cress).